A 238-amino-acid chain; its full sequence is MRPEGRAAGQIRPLRLTRHYTKHAEGSVLVEFGDTKVLCTASVDEGVPRFLKGQGQGWVTAEYGMLPRSTHSRMAREAAKGKQGGRTMEIQRLIARSLRAAVDLKKLGEFTITLDCDVIQADGGTRTASITGACVALADALGALVAAGKLKESPLKGMVAAVSVGIVAGGAVCDLEYVEDSAAETDMNVVMMEDGRMIEVQGTAEGEPFSHEELLTLLALARDGIGQIIQAQKTALEQ.

Phosphate-binding positions include arginine 86 and 124-126 (GTR).

This sequence belongs to the RNase PH family. Homohexameric ring arranged as a trimer of dimers.

The catalysed reaction is tRNA(n+1) + phosphate = tRNA(n) + a ribonucleoside 5'-diphosphate. In terms of biological role, phosphorolytic 3'-5' exoribonuclease that plays an important role in tRNA 3'-end maturation. Removes nucleotide residues following the 3'-CCA terminus of tRNAs; can also add nucleotides to the ends of RNA molecules by using nucleoside diphosphates as substrates, but this may not be physiologically important. Probably plays a role in initiation of 16S rRNA degradation (leading to ribosome degradation) during starvation. The protein is Ribonuclease PH of Edwardsiella ictaluri (strain 93-146).